The primary structure comprises 316 residues: Thymidylate synthase (316 aa).

DUMP contacts are provided by residues R23 and 178–179 (RR). C198 functions as the Nucleophile in the catalytic mechanism. DUMP is bound by residues 218–221 (RSGD), N229, and 259–261 (HIY). (6R)-5,10-methylene-5,6,7,8-tetrahydrofolate is bound at residue D221. A315 is a binding site for (6R)-5,10-methylene-5,6,7,8-tetrahydrofolate.

The protein belongs to the thymidylate synthase family. Bacterial-type ThyA subfamily. In terms of assembly, homodimer.

Its subcellular location is the cytoplasm. It carries out the reaction dUMP + (6R)-5,10-methylene-5,6,7,8-tetrahydrofolate = 7,8-dihydrofolate + dTMP. Its pathway is pyrimidine metabolism; dTTP biosynthesis. Functionally, catalyzes the reductive methylation of 2'-deoxyuridine-5'-monophosphate (dUMP) to 2'-deoxythymidine-5'-monophosphate (dTMP) while utilizing 5,10-methylenetetrahydrofolate (mTHF) as the methyl donor and reductant in the reaction, yielding dihydrofolate (DHF) as a by-product. This enzymatic reaction provides an intracellular de novo source of dTMP, an essential precursor for DNA biosynthesis. This chain is Thymidylate synthase, found in Latilactobacillus sakei subsp. sakei (strain 23K) (Lactobacillus sakei subsp. sakei).